The primary structure comprises 396 residues: MKFTPPPASLRNPLIIPEKIMMGPGPSNCSKRVLTAMTNTVLSNFHAELFRTMDEVKDGLRYIFQTENRATMCVSGSAHAGMEAMLSNLLEEGDRVLIAVNGIWAERAVEMSERYGADVRTIEGPPDRPFSLETLARAIELHQPKCLFLTHGDSSSGLLQPLEGVGQICHQHDCLLIVDAVASLCGVPFYMDKWEIDAVYTGAQKVLGAPPGITPISISPKALDVIRNRRTKSKVFYWDLLLLGNYWGCYDEPKRYHHTVASNLIFALREALAQIAEEGLENQIKRRIECAQILYEGLGKMGLDIFVKDPRHRLPTVTGIMIPKGVDWWKVSQYAMNNFSLEVQGGLGPTFGKAWRVGIMGECSTVQKIQFYLYGFKESLKATHPDYIFEESNGFH.

Residues 43-44 (SN) form a binds to and confers specificity for 3-hydroxykynurenine; shared with dimeric partner region. Pyridoxal 5'-phosphate is bound by residues 77 to 79 (SAH), serine 154, and glutamine 204. Serine 154 is a binding site for substrate. Lysine 205 is modified (N6-(pyridoxal phosphate)lysine). The pyridoxal 5'-phosphate site is built by tyrosine 256 and threonine 259. Arginine 356 contributes to the substrate binding site.

Belongs to the class-V pyridoxal-phosphate-dependent aminotransferase family. As to quaternary structure, homodimer. Pyridoxal 5'-phosphate is required as a cofactor. In terms of tissue distribution, expressed in gut and ovaries.

It is found in the peroxisome. The enzyme catalyses L-kynurenine + glyoxylate = kynurenate + glycine + H2O. The catalysed reaction is 3-hydroxy-L-kynurenine + glyoxylate = xanthurenate + glycine + H2O. It catalyses the reaction 3-hydroxy-L-kynurenine + pyruvate = xanthurenate + L-alanine + H2O. It carries out the reaction glyoxylate + L-alanine = glycine + pyruvate. The protein operates within amino-acid degradation; L-kynurenine degradation; kynurenate from L-kynurenine: step 1/2. Catalyzes the pyridoxal 5'-phosphate-dependent transamination of both 3-hydroxykynurenine and L-kynurenine to xanthurenic acid and kynurenic acid, respectively, preferentially using the alpha-ketoacid glyoxylate as the amino group acceptor. Although glyoxylate is the preferred amino group acceptor, transamination of 3-hydroxykynurenine also works with pyruvate as the amino acceptor in vitro. Involved in the detoxification of cytotoxic metabolite 3-hydroxykynurenine generated by the hydroxylation of L-kynurenine, an intermediate in the tryptophan catabolism pathway. The Plasmodium parasite uses xanthurenic acid produced in the midgut to activate its gametocytes ingested during a blood meal. Also catalyzes, although with a lesser efficiency, the transamination of alanine with glyoxylate as an amino group acceptor. May play a role in the detoxification of glyoxylate, a toxic plant metabolite from the diet. The sequence is that of 3-hydroxykynurenine transaminase from Anopheles gambiae (African malaria mosquito).